We begin with the raw amino-acid sequence, 113 residues long: Nucleoid-associated protein THA_1374 (113 aa).

It belongs to the YbaB/EbfC family. Homodimer.

It is found in the cytoplasm. It localises to the nucleoid. Functionally, binds to DNA and alters its conformation. May be involved in regulation of gene expression, nucleoid organization and DNA protection. This Thermosipho africanus (strain TCF52B) protein is Nucleoid-associated protein THA_1374.